A 367-amino-acid chain; its full sequence is Peptide chain release factor 2 (367 aa).

Q250 is modified (N5-methylglutamine).

Belongs to the prokaryotic/mitochondrial release factor family. In terms of processing, methylated by PrmC. Methylation increases the termination efficiency of RF2.

Its subcellular location is the cytoplasm. Its function is as follows. Peptide chain release factor 2 directs the termination of translation in response to the peptide chain termination codons UGA and UAA. This chain is Peptide chain release factor 2, found in Saccharopolyspora erythraea (strain ATCC 11635 / DSM 40517 / JCM 4748 / NBRC 13426 / NCIMB 8594 / NRRL 2338).